The sequence spans 1823 residues: MWKLLLVALAFALADAQFQPGKVYRYSYDAFSISGLPEPGVNRAGLSGEMKIEIHGHTHNQATLKITQVNLKYFLGPWPSDSFYPLTAGYDHFIQQLEVPVRFDYSAGRIGDIYAPPQVTDTAVNIVRGILNLFQLSLKKNQQTFELQETGVEGICQTTYVVQEGYRTNEMAVVKTKDLNNCDHKVYKTMGTAYAERCPTCQKMNKNLRSTAVYNYAIFDEPSGYIIKSAHSEEIQQLSVFDIKEGNVVIESRQKLILEGIQSAPAASQAASLQNRGGLMYKFPSSAITKMSSLFVTKGKNLESEIHTVLKHLVENNQLSVHEDAPAKFLRLTAFLRNVDAGVLQSIWHKLHQQKDYRRWILDAVPAMATSEALLFLKRTLASEQLTSAEATQIVYSTLSNQQATRESLSYARELLHTSFIRNRPILRKTAVLGYGSLVFRYCANTVSCPDELLQPLHDLLSQSSDRADEEEIVLALKALGNAGQPNSIKKIQRFLPGQGKSLDEYSTRVQAEAIMALRNIAKRDPRKVQEIVLPIFLNVAIKSELRIRSCIVFFESKPSVALVSMVAVRLRREPNLQVASFVYSQMRSLSRSSNPEFRDVAAACSVAIKMLGSKLDRLGCRYSKAVHVDTFNARTMAGVSADYFRINSPSGPLPRAVAAKIRGQGMGYASDIVEFGLRAEGLQELLYRGSQEQDAYGTALDRQTLLRSGQARSHVSSIHDTLRKLSDWKSVPEERPLASGYVKVHGQEVVFAELDKKMMQRISQLWHSARSHHAAAQEQIRAVVSKLEQGMDVLLTKGYVVSEVRYMQPVCIGIPMDLNLLVSGVTTNRANLHASFSQSLPADMKLADLLATNIELRVAATTSMSQHAVAIMGLTTDLAKAGMQTHYKTSAGLGVNGKIEMNARESNFKASLKPFQQKTVVVLSTMESIVFVRDPSGSRILPVLPPKMTLDKGLISQQQQQPHHQQQPHQHGQDQARAAYQRPWASHEFSPAEQKQIHDIMTARPVMRRKQHCSKSAALSSKVCFSARLRNAAFIRNALLYKITGDYVSKVYVQPTSSKAQIQKVELELQAGPQAAEKVIRMVELVAKASKKSKKNSTITEEGVGETIISQLKKILSSDKDKDAKKPPGSSSSSSSSSSSSSSSSSSDKSGKKTPRQGSTVNLAAKRASKKQRGKDSSSSSSSSSSSSDSSKSPHKHGGAKRQHAGHGAPHLGPQSHSSSSSSSSSSSSSSASKSFSTVKPPMTRKPRPARSSSSSSSSDSSSSSSSSSSSSSSSSSSSSSSSESKSLEWLAVKDVNQSAFYNFKYVPQRKPQTSRRHTPASSSSSSSSSSSSSSSSSSSDSDMTVSAESFEKHSKPKVVIVLRAVRADGKQQGLQTTLYYGLTSNGLPKAKIVAVELSDLSVWKLCAKFRLSAHMKAKAAIGWGKNCQQYRAMLEASTGNLQSHPAARVDIKWGRLPSSLQRAKNALLENKAPVIASKLEMEIMPKKNQKHQVSVILAAMTPRRMNIIVKLPKVTYFQQGILLPFTFPSPRFWDRPEGSQSDSLPAQIASAFSGIVQDPVASACELNEQSLTTFNGAFFNYDMPESCYHVLAQECSSRPPFIVLIKLDSERRISLELQLDDKKVKIVSRNDIRVDGEKVPLRRLSQKNQYGFLVLDAGVHLLLKYKDLRVSFNSSSVQVWVPSSLKGQTCGLCGRNDDELVTEMRMPNLEVAKDFTSFAHSWIAPDETCGGACALSRQTVHKESTSVISGSRENCYSTEPIMRCPATCSASRSVPVSVAMHCLPAESEAISLAMSEGRPFSLSGKSEDLVTEMEAHVSCVA.

A signal peptide spans 1–14 (MWKLLLVALAFALA). Q17 carries the post-translational modification Pyrrolidone carboxylic acid. In terms of domain architecture, Vitellogenin spans 18–658 (FQPGKVYRYS…SPSGPLPRAV (641 aa)). A disordered region spans residues 953 to 986 (KGLISQQQQQPHHQQQPHQHGQDQARAAYQRPWA). Over residues 958 to 976 (QQQQQPHHQQQPHQHGQDQ) the composition is skewed to low complexity. Residue N1097 is glycosylated (N-linked (GlcNAc...) asparagine). A disordered region spans residues 1119 to 1289 (SDKDKDAKKP…SSSSSESKSL (171 aa)). Composition is skewed to low complexity over residues 1128–1149 (PPGSSSSSSSSSSSSSSSSSSD) and 1178–1192 (SSSSSSSSSSSSDSS). Basic residues predominate over residues 1194 to 1206 (SPHKHGGAKRQHA). Composition is skewed to low complexity over residues 1217-1238 (SHSSSSSSSSSSSSSSASKSFS) and 1253-1286 (SSSSSSSSDSSSSSSSSSSSSSSSSSSSSSSSES). N1298 carries N-linked (GlcNAc...) asparagine glycosylation. The disordered stretch occupies residues 1308–1351 (VPQRKPQTSRRHTPASSSSSSSSSSSSSSSSSSSDSDMTVSAES). Positions 1323-1344 (SSSSSSSSSSSSSSSSSSSDSD) are enriched in low complexity. A VWFD domain is found at 1564–1732 (SACELNEQSL…SWIAPDETCG (169 aa)). 2 disulfide bridges follow: C1566/C1695 and C1589/C1731. The N-linked (GlcNAc...) asparagine glycan is linked to N1675.

Post-translationally, what corresponds to phosvitin in other species is lost during maturation of vitellogenin to lipovitellin. Produced by the liver, secreted into the blood and then sequestered by receptor mediated endocytosis into growing oocytes, where it is generally cleaved, giving rise to the respective yolk components lipovitellins 1 and 2.

Precursor of the major egg-yolk proteins that are sources of nutrients during early development of oviparous organisms. The chain is Vitellogenin from Ichthyomyzon unicuspis (Silver lamprey).